A 297-amino-acid chain; its full sequence is MNIAIRNPVVARKEEGSLQVALDPDLKIETAKVFAVYGKGGIGKSTTSSNLSVAFSKLGKRVLQIGCDPKHDSTFTLTKRLAPTVIDALEAVNFHSEELRVEDFVVEGYNGVMCVEAGGPPAGTGCGGYVVGQTVKLLKEHHLLEDTDVVVFDVLGDVVCGGFASPLQHADRALIVTANDFDSIFAMNRIVAAIHAKSKNYGVRLGGVIANRSAKTDEIDRFNDAVGLKRLAHFPDLDVVRRSRLKKSTLFEMESSPELDAVTAEYMRLAETLWAGAEPCEAQPMKDRDLFEFLGFD.

ATP is bound by residues 41–46 and K70; that span reads GIGKST. A Mg(2+)-binding site is contributed by S45. Residues C126 and C160 each contribute to the [4Fe-4S] cluster site. ATP contacts are provided by residues 211–212 and 235–237; these read NR and PDL.

Belongs to the NifH/BchL/ChlL family. In terms of assembly, homodimer. Protochlorophyllide reductase is composed of three subunits; BchL, BchN and BchB. [4Fe-4S] cluster serves as cofactor.

The catalysed reaction is chlorophyllide a + oxidized 2[4Fe-4S]-[ferredoxin] + 2 ADP + 2 phosphate = protochlorophyllide a + reduced 2[4Fe-4S]-[ferredoxin] + 2 ATP + 2 H2O. It participates in porphyrin-containing compound metabolism; bacteriochlorophyll biosynthesis (light-independent). Its function is as follows. Component of the dark-operative protochlorophyllide reductase (DPOR) that uses Mg-ATP and reduced ferredoxin to reduce ring D of protochlorophyllide (Pchlide) to form chlorophyllide a (Chlide). This reaction is light-independent. The L component serves as a unique electron donor to the NB-component of the complex, and binds Mg-ATP. The protein is Light-independent protochlorophyllide reductase iron-sulfur ATP-binding protein of Methylobacterium radiotolerans (strain ATCC 27329 / DSM 1819 / JCM 2831 / NBRC 15690 / NCIMB 10815 / 0-1).